We begin with the raw amino-acid sequence, 309 residues long: Ribonuclease Z (309 aa).

Zn(2+) contacts are provided by His-63, His-65, Asp-67, His-68, His-141, Asp-212, and His-270. Asp-67 functions as the Proton acceptor in the catalytic mechanism.

The protein belongs to the RNase Z family. In terms of assembly, homodimer. It depends on Zn(2+) as a cofactor.

The enzyme catalyses Endonucleolytic cleavage of RNA, removing extra 3' nucleotides from tRNA precursor, generating 3' termini of tRNAs. A 3'-hydroxy group is left at the tRNA terminus and a 5'-phosphoryl group is left at the trailer molecule.. Zinc phosphodiesterase, which displays some tRNA 3'-processing endonuclease activity. Probably involved in tRNA maturation, by removing a 3'-trailer from precursor tRNA. In Lactobacillus johnsonii (strain CNCM I-12250 / La1 / NCC 533), this protein is Ribonuclease Z.